The following is a 117-amino-acid chain: Conotoxin vil14a (117 aa).

Positions M1–S22 are cleaved as a signal peptide. A propeptide spanning residues E23 to R90 is cleaved from the precursor. Residues R53–V86 are disordered. The span at R62–E80 shows a compositional bias: basic and acidic residues. Cystine bridges form between C96–C116 and C100–C112.

It belongs to the conotoxin R superfamily. Expressed by the venom duct.

Its subcellular location is the secreted. The protein is Conotoxin vil14a of Conus villepinii (Villepin's cone).